The primary structure comprises 234 residues: MVSPENANWICDLIDADYGSFTIQGPGFSWPVQQPIGVSSNSSAGVDGSAGNSEASKEPGSKKRGRCESSSATSSKACREKQRRDRLNDKFMELGAILEPGNPPKTDKAAILVDAVRMVTQLRGEAQKLKDSNSSLQDKIKELKTEKNELRDEKQRLKTEKEKLEQQLKAMNAPQPSFFPAPPMMPTAFASAQGQAPGNKMVPIISYPGVAMWQFMPPASVDTSQDHVLRPPVA.

A disordered region spans residues Q34–D85. Over residues I36–E54 the composition is skewed to polar residues. The 52-residue stretch at S71–L122 folds into the bHLH domain.

In terms of assembly, homodimer. Interacts with BTS and BHLH47/PYE. As to expression, widely expressed throughout development, mostly in vasculatures.

The protein resides in the nucleus. Functionally, transcription factor. Plays a role in resistance to amide-linked indole-3-acetic acid (IAA) conjugates such as IAA-Leu and IAA-Phe. May regulate gene expression in response to metal homeostasis changes. This chain is Transcription factor ILR3 (ILR3), found in Arabidopsis thaliana (Mouse-ear cress).